A 271-amino-acid polypeptide reads, in one-letter code: Putative phosphoenolpyruvate synthase regulatory protein (271 aa).

152–159 contributes to the ADP binding site; that stretch reads GVSRSGKT.

The protein belongs to the pyruvate, phosphate/water dikinase regulatory protein family. PSRP subfamily.

The catalysed reaction is [pyruvate, water dikinase] + ADP = [pyruvate, water dikinase]-phosphate + AMP + H(+). The enzyme catalyses [pyruvate, water dikinase]-phosphate + phosphate + H(+) = [pyruvate, water dikinase] + diphosphate. Bifunctional serine/threonine kinase and phosphorylase involved in the regulation of the phosphoenolpyruvate synthase (PEPS) by catalyzing its phosphorylation/dephosphorylation. This Dichelobacter nodosus (strain VCS1703A) protein is Putative phosphoenolpyruvate synthase regulatory protein.